The following is a 1294-amino-acid chain: Voltage-gated inwardly rectifying potassium channel KCNH2 (1294 aa).

Residues R1–Y377 are Cytoplasmic-facing. In terms of domain architecture, PAS spans V15 to H44. The PAC domain occupies R66 to D118. The interval L207–S258 is disordered. Over residues G211–T223 the composition is skewed to pro residues. Phosphoserine is present on residues S212 and S216. Polar residues predominate over residues P232 to R243. Phosphoserine is present on residues S257, S258, S294, and S325. The helical transmembrane segment at S378 to F398 threads the bilayer. At T399–Q424 the chain is on the extracellular side. The helical transmembrane segment at P425–F445 threads the bilayer. The Cytoplasmic portion of the chain corresponds to R446–K469. The helical transmembrane segment at G470–G490 threads the bilayer. Residues S491 to L494 lie on the Extracellular side of the membrane. The chain crosses the membrane as a helical; Voltage-sensor span at residues I495–R515. Residues Y516–A521 are Cytoplasmic-facing. Residues A522–W542 traverse the membrane as a helical segment. The Extracellular segment spans residues Y543–Y585. The pore-forming intramembrane region spans V586–P606. The Selectivity filter motif lies at S598–N603. Topologically, residues N607–K612 are extracellular. A helical transmembrane segment spans residues I613–V633. At S634 to Y1294 the chain is on the cytoplasmic side. Positions P716 to L816 are cNMP-binding domain. Residues G844–T956 form a disordered region. Phosphoserine is present on residues S845 and S848. Residues R857–R866 show a composition bias toward basic residues. Positions G902–E913 are enriched in low complexity. The residue at position 987 (R987) is an Omega-N-methylarginine. A coiled-coil region spans residues R1008–T1035. S1110 carries the post-translational modification Phosphoserine.

It belongs to the potassium channel family. H (Eag) (TC 1.A.1.20) subfamily. Kv11.1/KCNH2 sub-subfamily. In terms of assembly, the potassium channel is probably composed of a homo- or heterotetrameric complex of pore-forming alpha subunits that can associate with modulating beta subunits. Interacts with DNAJB12 and DNAJB14; chaperones DNAJB12 and DNAJB14 promote tetramerization. Heteromultimer with KCNH6/ERG2 and KCNH7/ERG3. Interacts with ALG10B. Forms a stable complex with KCNE1 or KCNE2, and that this heteromultimerization regulates Inward rectifier potassium channel activity. Interacts with CANX. The core-glycosylated, but not the fully glycosylated form interacts with RNF207. Interacts with NDFIP1 and NDFIP2; this interaction decreases the cell membrane expression by targeting KCNH2, through interaction with NEDD4L, for the degradation through the multivesicular bodies (MVBs)-lysosomal pathway. Phosphorylated on serine and threonine residues. Phosphorylation by PKA inhibits ion conduction. Highly expressed in heart and brain.

It localises to the cell membrane. The enzyme catalyses K(+)(in) = K(+)(out). Its function is as follows. Pore-forming (alpha) subunit of voltage-gated inwardly rectifying potassium channel. Characterized by unusual gating kinetics by producing relatively small outward currents during membrane depolarization and large inward currents during subsequent repolarization which reflect a rapid inactivation during depolarization and quick recovery from inactivation but slow deactivation (closing) during repolarization. Channel properties are modulated by cAMP and subunit assembly. Forms a stable complex with KCNE1 or KCNE2, and that this heteromultimerization regulates inward rectifier potassium channel activity. This Cavia porcellus (Guinea pig) protein is Voltage-gated inwardly rectifying potassium channel KCNH2.